We begin with the raw amino-acid sequence, 209 residues long: Outer-membrane lipoprotein LolB (209 aa).

The signal sequence occupies residues 1-17; it reads MATVFSRALGALVLGVA. Cys-18 carries the N-palmitoyl cysteine lipid modification. Cys-18 carries S-diacylglycerol cysteine lipidation.

Belongs to the LolB family. In terms of assembly, monomer.

It is found in the cell outer membrane. In terms of biological role, plays a critical role in the incorporation of lipoproteins in the outer membrane after they are released by the LolA protein. This Ralstonia nicotianae (strain ATCC BAA-1114 / GMI1000) (Ralstonia solanacearum) protein is Outer-membrane lipoprotein LolB.